The chain runs to 299 residues: Ankyrin repeat domain-containing protein 54 (299 aa).

The disordered stretch occupies residues 1 to 32 (MAAAAGGADDESRSGRSSSDGECAVAPEPLTG). The residue at position 2 (Ala-2) is an N-acetylalanine. Phosphoserine is present on residues Ser-57 and Ser-62. The short motif at 98–116 (RRLGPTGKEVHALKRLRDS) is the Nuclear localization signal (NLS) element. ANK repeat units lie at residues 108–137 (HALK…DPCA), 141–170 (KGRT…DPNQ), 174–203 (LGNT…RVDA), and 207–239 (AGRT…EVKQ). Residues 140 to 240 (DKGRTALHFA…EAVRLEVKQI (101 aa)) are LYN-binding. Positions 282-292 (LLASFTSLSLQ) match the Nuclear export signal (NES) motif.

Interacts (via ankyrin repeat region) with LYN (via SH3-domain) in an activation-independent status of LYN. Forms a multiprotein complex with LYN and HCLS1. Interacts with TSN2, VAV1, DBNL and LASP1.

The protein resides in the nucleus. It is found in the cytoplasm. It localises to the midbody. Plays an important role in regulating intracellular signaling events associated with erythroid terminal differentiation. The chain is Ankyrin repeat domain-containing protein 54 (ANKRD54) from Bos taurus (Bovine).